Consider the following 786-residue polypeptide: Endonuclease MutS2 (786 aa).

ATP is bound at residue glycine 332 to threonine 339. The Smr domain occupies isoleucine 711–lysine 786.

It belongs to the DNA mismatch repair MutS family. MutS2 subfamily. As to quaternary structure, homodimer. Binds to stalled ribosomes, contacting rRNA.

In terms of biological role, endonuclease that is involved in the suppression of homologous recombination and thus may have a key role in the control of bacterial genetic diversity. Functionally, acts as a ribosome collision sensor, splitting the ribosome into its 2 subunits. Detects stalled/collided 70S ribosomes which it binds and splits by an ATP-hydrolysis driven conformational change. Acts upstream of the ribosome quality control system (RQC), a ribosome-associated complex that mediates the extraction of incompletely synthesized nascent chains from stalled ribosomes and their subsequent degradation. Probably generates substrates for RQC. This is Endonuclease MutS2 from Clostridium perfringens (strain ATCC 13124 / DSM 756 / JCM 1290 / NCIMB 6125 / NCTC 8237 / Type A).